The chain runs to 169 residues: Cell division inhibitor SulA (169 aa).

A ftsZ binding region spans residues 106–112 (ALRTGNY). The lon protease binding stretch occupies residues 162–169 (KIHSNLYH).

The protein belongs to the SulA family. As to quaternary structure, interacts with FtsZ. Is rapidly cleaved and degraded by the Lon protease once DNA damage is repaired.

Functionally, component of the SOS system and an inhibitor of cell division. Accumulation of SulA causes rapid cessation of cell division and the appearance of long, non-septate filaments. In the presence of GTP, binds a polymerization-competent form of FtsZ in a 1:1 ratio, thus inhibiting FtsZ polymerization and therefore preventing it from participating in the assembly of the Z ring. This mechanism prevents the premature segregation of damaged DNA to daughter cells during cell division. The protein is Cell division inhibitor SulA of Salmonella arizonae (strain ATCC BAA-731 / CDC346-86 / RSK2980).